Consider the following 380-residue polypeptide: 5-amino-6-(D-ribitylamino)uracil--L-tyrosine 4-hydroxyphenyl transferase (380 aa).

Residues 56-303 (VTYIINRNIN…GAVARIYLGN (248 aa)) form the Radical SAM core domain. C70, C74, and C77 together coordinate [4Fe-4S] cluster.

This sequence belongs to the radical SAM superfamily. CofH family. Consists of two subunits, CofG and CofH. [4Fe-4S] cluster serves as cofactor.

The catalysed reaction is 5-amino-6-(D-ribitylamino)uracil + L-tyrosine + S-adenosyl-L-methionine = 5-amino-5-(4-hydroxybenzyl)-6-(D-ribitylimino)-5,6-dihydrouracil + 2-iminoacetate + 5'-deoxyadenosine + L-methionine + H(+). Its pathway is cofactor biosynthesis; coenzyme F0 biosynthesis. Catalyzes the radical-mediated synthesis of 5-amino-5-(4-hydroxybenzyl)-6-(D-ribitylimino)-5,6-dihydrouracil from 5-amino-6-(D-ribitylamino)uracil and L-tyrosine. The chain is 5-amino-6-(D-ribitylamino)uracil--L-tyrosine 4-hydroxyphenyl transferase from Nostoc punctiforme (strain ATCC 29133 / PCC 73102).